A 322-amino-acid polypeptide reads, in one-letter code: Quinolinate synthase (322 aa).

Iminosuccinate-binding residues include His38 and Ser55. Residue Cys100 coordinates [4Fe-4S] cluster. Iminosuccinate contacts are provided by residues Tyr126–Asn128 and Ser143. Position 186 (Cys186) interacts with [4Fe-4S] cluster. Iminosuccinate contacts are provided by residues His212 to Glu214 and Thr229. Cys279 provides a ligand contact to [4Fe-4S] cluster.

This sequence belongs to the quinolinate synthase family. Type 2 subfamily. The cofactor is [4Fe-4S] cluster.

The protein localises to the cytoplasm. It carries out the reaction iminosuccinate + dihydroxyacetone phosphate = quinolinate + phosphate + 2 H2O + H(+). It participates in cofactor biosynthesis; NAD(+) biosynthesis; quinolinate from iminoaspartate: step 1/1. Its function is as follows. Catalyzes the condensation of iminoaspartate with dihydroxyacetone phosphate to form quinolinate. The polypeptide is Quinolinate synthase (Aquifex aeolicus (strain VF5)).